We begin with the raw amino-acid sequence, 286 residues long: Phosphatidylserine decarboxylase proenzyme (286 aa).

Residues D90, H147, and S252 each act as charge relay system; for autoendoproteolytic cleavage activity in the active site. The active-site Schiff-base intermediate with substrate; via pyruvic acid; for decarboxylase activity is the S252. Position 252 is a pyruvic acid (Ser); by autocatalysis (S252).

It belongs to the phosphatidylserine decarboxylase family. PSD-B subfamily. Prokaryotic type I sub-subfamily. In terms of assembly, heterodimer of a large membrane-associated beta subunit and a small pyruvoyl-containing alpha subunit. It depends on pyruvate as a cofactor. Post-translationally, is synthesized initially as an inactive proenzyme. Formation of the active enzyme involves a self-maturation process in which the active site pyruvoyl group is generated from an internal serine residue via an autocatalytic post-translational modification. Two non-identical subunits are generated from the proenzyme in this reaction, and the pyruvate is formed at the N-terminus of the alpha chain, which is derived from the carboxyl end of the proenzyme. The autoendoproteolytic cleavage occurs by a canonical serine protease mechanism, in which the side chain hydroxyl group of the serine supplies its oxygen atom to form the C-terminus of the beta chain, while the remainder of the serine residue undergoes an oxidative deamination to produce ammonia and the pyruvoyl prosthetic group on the alpha chain. During this reaction, the Ser that is part of the protease active site of the proenzyme becomes the pyruvoyl prosthetic group, which constitutes an essential element of the active site of the mature decarboxylase.

The protein resides in the cell membrane. It carries out the reaction a 1,2-diacyl-sn-glycero-3-phospho-L-serine + H(+) = a 1,2-diacyl-sn-glycero-3-phosphoethanolamine + CO2. Its pathway is phospholipid metabolism; phosphatidylethanolamine biosynthesis; phosphatidylethanolamine from CDP-diacylglycerol: step 2/2. Catalyzes the formation of phosphatidylethanolamine (PtdEtn) from phosphatidylserine (PtdSer). The chain is Phosphatidylserine decarboxylase proenzyme from Azotobacter vinelandii (strain DJ / ATCC BAA-1303).